The chain runs to 251 residues: Ubiquinone/menaquinone biosynthesis C-methyltransferase UbiE (251 aa).

Residues Thr-74, Asp-95, 123–124, and Ser-140 each bind S-adenosyl-L-methionine; that span reads NA.

Belongs to the class I-like SAM-binding methyltransferase superfamily. MenG/UbiE family.

The catalysed reaction is a 2-demethylmenaquinol + S-adenosyl-L-methionine = a menaquinol + S-adenosyl-L-homocysteine + H(+). It catalyses the reaction a 2-methoxy-6-(all-trans-polyprenyl)benzene-1,4-diol + S-adenosyl-L-methionine = a 5-methoxy-2-methyl-3-(all-trans-polyprenyl)benzene-1,4-diol + S-adenosyl-L-homocysteine + H(+). The protein operates within quinol/quinone metabolism; menaquinone biosynthesis; menaquinol from 1,4-dihydroxy-2-naphthoate: step 2/2. Its pathway is cofactor biosynthesis; ubiquinone biosynthesis. Functionally, methyltransferase required for the conversion of demethylmenaquinol (DMKH2) to menaquinol (MKH2) and the conversion of 2-polyprenyl-6-methoxy-1,4-benzoquinol (DDMQH2) to 2-polyprenyl-3-methyl-6-methoxy-1,4-benzoquinol (DMQH2). This Escherichia coli O9:H4 (strain HS) protein is Ubiquinone/menaquinone biosynthesis C-methyltransferase UbiE.